We begin with the raw amino-acid sequence, 217 residues long: Translation initiation factor IF-3 (217 aa).

The disordered stretch occupies residues 185–217 (YNLPETETTRIREENREKQKEKENTSKEGNKDA). Residues 191-217 (ETTRIREENREKQKEKENTSKEGNKDA) show a composition bias toward basic and acidic residues.

The protein belongs to the IF-3 family. In terms of assembly, monomer.

Its subcellular location is the cytoplasm. In terms of biological role, IF-3 binds to the 30S ribosomal subunit and shifts the equilibrium between 70S ribosomes and their 50S and 30S subunits in favor of the free subunits, thus enhancing the availability of 30S subunits on which protein synthesis initiation begins. This is Translation initiation factor IF-3 from Methylacidiphilum infernorum (isolate V4) (Methylokorus infernorum (strain V4)).